Consider the following 260-residue polypeptide: Phosphate import ATP-binding protein PstB 2 (260 aa).

Positions 9–255 constitute an ABC transporter domain; the sequence is IKVKDLSFYY…PLDSRTRDYV (247 aa). 41-48 contributes to the ATP binding site; that stretch reads GPSGCGKS.

It belongs to the ABC transporter superfamily. Phosphate importer (TC 3.A.1.7) family. In terms of assembly, the complex is composed of two ATP-binding proteins (PstB), two transmembrane proteins (PstC and PstA) and a solute-binding protein (PstS).

The protein localises to the cell inner membrane. The catalysed reaction is phosphate(out) + ATP + H2O = ADP + 2 phosphate(in) + H(+). Functionally, part of the ABC transporter complex PstSACB involved in phosphate import. Responsible for energy coupling to the transport system. The polypeptide is Phosphate import ATP-binding protein PstB 2 (Nostoc sp. (strain PCC 7120 / SAG 25.82 / UTEX 2576)).